A 238-amino-acid chain; its full sequence is Small heat shock protein, chloroplastic (238 aa).

The segment at A31 to P87 is disordered. Over residues V58–Q75 the composition is skewed to low complexity. One can recognise a sHSP domain in the interval A124–Q238.

Belongs to the small heat shock protein (HSP20) family.

The protein localises to the plastid. It localises to the chloroplast. This chain is Small heat shock protein, chloroplastic (HSP21), found in Triticum aestivum (Wheat).